The sequence spans 142 residues: Protein spalt-accessory (142 aa).

A signal peptide spans 1-16 (MKLLIALFVLVNAVIA). Gly residues predominate over residues 65–77 (GQGGVSPGQGGFA). The segment at 65 to 142 (GQGGVSPGQG…HHEHHGHHRH (78 aa)) is disordered. The segment covering 112–124 (NHHEYPEHHGDHH) has biased composition (basic and acidic residues). A compositionally biased stretch (basic residues) spans 125 to 142 (REHHEHHGHHEHHGHHRH).

It is found in the secreted. Likely to be involved in the establishment of the head. This is Protein spalt-accessory (sala) from Drosophila orena (Fruit fly).